The sequence spans 173 residues: T cell receptor gamma constant 1 (173 aa).

Positions 10–104 constitute an Ig-like domain; that stretch reads PKPTIFLPSI…NKNGVDQEII (95 aa). A disulfide bridge links Cys-32 with Cys-88. 4 N-linked (GlcNAc...) asparagine glycosylation sites follow: Asn-66, Asn-120, Asn-126, and Asn-135. A helical transmembrane segment spans residues 139 to 161; that stretch reads YYMYLLLLLKSVVYFAIITCCLL.

As to quaternary structure, gamma-delta TR is a heterodimer composed of a gamma and delta chain; disulfide-linked. The gamma-delta TR is associated with the transmembrane signaling CD3 coreceptor proteins following the stoichiometry: a single gamma-delta TR heterodimer associates with one CD3D-CD3E heterodimer, one CD3G-CD3E heterodimer and one CD247 homodimer forming a stable octameric structure. Upon activation, gamma-delta TR complex associates with FCER1G to initiate intracellular signaling.

It localises to the cell membrane. Functionally, constant region of T cell receptor (TR) gamma chain that participates in the antigen recognition. Gamma-delta TRs recognize a variety of self and foreign non-peptide antigens frequently expressed at the epithelial boundaries between the host and external environment, including endogenous lipids presented by MH-like protein CD1D and phosphoantigens presented by butyrophilin-like molecule BTN3A1. Upon antigen recognition induces rapid, innate-like immune responses involved in pathogen clearance and tissue repair. Binding of gamma-delta TR complex to antigen triggers phosphorylation of immunoreceptor tyrosine-based activation motifs (ITAMs) in the CD3 chains by the LCK and FYN kinases, allowing the recruitment, phosphorylation, and activation of ZAP70 that facilitates phosphorylation of the scaffolding proteins LCP2 and LAT. This lead to the formation of a supramolecular signalosome that recruits the phospholipase PLCG1, resulting in calcium mobilization and ERK activation, ultimately leading to T cell expansion and differentiation into effector cells. Gamma-delta TRs are produced through somatic rearrangement of a limited repertoire of variable (V), diversity (D), and joining (J) genes. The potential diversity of gamma-delta TRs is conferred by the unique ability to rearrange (D) genes in tandem and to utilize all three reading frames. The combinatorial diversity is considerably increased by the sequence exonuclease trimming and random nucleotide (N) region additions which occur during the V-(D)-J rearrangements. This is T cell receptor gamma constant 1 from Homo sapiens (Human).